A 272-amino-acid chain; its full sequence is Phosphate import ATP-binding protein PstB 1 (272 aa).

The region spanning 26–267 is the ABC transporter domain; that stretch reads ITIENLDLHY…PMKKQTEDYI (242 aa). Residue 58 to 65 coordinates ATP; sequence GPSGCGKS.

It belongs to the ABC transporter superfamily. Phosphate importer (TC 3.A.1.7) family. The complex is composed of two ATP-binding proteins (PstB), two transmembrane proteins (PstC and PstA) and a solute-binding protein (PstS).

The protein localises to the cell inner membrane. The enzyme catalyses phosphate(out) + ATP + H2O = ADP + 2 phosphate(in) + H(+). Functionally, part of the ABC transporter complex PstSACB involved in phosphate import. Responsible for energy coupling to the transport system. This Vibrio vulnificus (strain YJ016) protein is Phosphate import ATP-binding protein PstB 1.